Consider the following 3620-residue polypeptide: Cubilin (3620 aa).

Positions 1-20 (MSSPFLWSLIILLTFAESNG) are cleaved as a signal peptide. The propeptide at 21-32 (EAGGFELQRQKR) is removed in mature form. The segment at 39 to 46 (PRMATERG) is interaction with AMN. Residue Asn-102 is glycosylated (N-linked (GlcNAc...) asparagine). The EGF-like 1 domain occupies 129–165 (DKKVCSSNPCQNGGTCLNLHDSFFCICPSQWKGPLCS). 6 disulfides stabilise this stretch: Cys-133–Cys-144, Cys-138–Cys-153, Cys-155–Cys-164, Cys-171–Cys-187, Cys-181–Cys-196, and Cys-198–Cys-207. The 42-residue stretch at 167–208 (DVNECQIYSGTPLGCQNGATCENTAGSYSCLCSPETHGPQCA) folds into the EGF-like 2; calcium-binding domain. Residue Asn-253 is glycosylated (N-linked (GlcNAc...) asparagine). Residues 260-301 (DIDECNLQHAPCSPLVQCFNTQGSFYCGACPTGWQGNGYSCQ) enclose the EGF-like 3; calcium-binding domain. Disulfide bonds link Cys-264–Cys-277, Cys-271–Cys-286, Cys-289–Cys-300, Cys-306–Cys-321, Cys-313–Cys-330, Cys-333–Cys-344, Cys-350–Cys-363, Cys-357–Cys-373, Cys-396–Cys-406, Cys-401–Cys-415, Cys-417–Cys-426, Cys-433–Cys-444, Cys-438–Cys-453, Cys-455–Cys-464, Cys-471–Cys-497, Cys-524–Cys-546, Cys-587–Cys-613, Cys-640–Cys-662, and Cys-705–Cys-730. Residues 302 to 345 (DIDECKINNGGCSVVPPVMCVNTLGSYHCQACPPGYQGDGRVCT) form the EGF-like 4; calcium-binding domain. EGF-like domains follow at residues 346–382 (VIDI…YTGN) and 392–427 (LSDT…INCT). N-linked (GlcNAc...) asparagine glycosylation is present at Asn-425. One can recognise an EGF-like 7; calcium-binding domain in the interval 429 to 465 (NINECLSNPCFNGGTCVDGVNAFSCECTRFWTGFLCQ). CUB domains are found at residues 471–583 (CGGS…WETQ), 587–699 (CGGI…YLTS), 705–812 (CGGN…YQVA), 813–924 (CGGE…FSAA), 928–1038 (CGEI…YEAT), 1044–1158 (CMED…WDGS), 1162–1274 (CGGN…YQQT), 1275–1386 (CRNV…WFIH), 1388–1503 (CGGE…WQAV), 1507–1616 (CGGI…FNQV), 1617–1731 (CGGH…YAAS), 1735–1847 (CGGT…FTKI), and 1849–1960 (GNDN…WFAV). 2 N-linked (GlcNAc...) asparagine glycosylation sites follow: Asn-708 and Asn-745. The cysteines at positions 757 and 775 are disulfide-linked. Asn-777 carries N-linked (GlcNAc...) asparagine glycosylation. The cysteines at positions 813 and 838 are disulfide-linked. N-linked (GlcNAc...) asparagine glycosylation is present at Asn-853. Cystine bridges form between Cys-865–Cys-887 and Cys-928–Cys-954. N-linked (GlcNAc...) asparagine glycosylation is present at Asn-953. Glu-976 serves as a coordination point for Ca(2+). Residue Asn-980 is glycosylated (N-linked (GlcNAc...) asparagine). A disulfide bridge links Cys-981 with Cys-1001. Asp-984, Asp-1023, Asp-1025, and Leu-1026 together coordinate Ca(2+). The cysteines at positions 1044 and 1070 are disulfide-linked. Residues Glu-1092, Asp-1102, and Asp-1143 each contribute to the Ca(2+) site. Cys-1099 and Cys-1121 form a disulfide bridge. Cysteines 1162 and 1188 form a disulfide. Asn-1165 is a glycosylation site (N-linked (GlcNAc...) asparagine). Glu-1210 contributes to the Ca(2+) binding site. N-linked (GlcNAc...) asparagine glycosylation occurs at Asn-1214. Residues Cys-1215 and Cys-1237 are joined by a disulfide bond. Ca(2+) contacts are provided by Asp-1218, Asp-1259, and Gln-1262. A disulfide bridge links Cys-1275 with Cys-1303. Residues Asn-1304 and Asn-1316 are each glycosylated (N-linked (GlcNAc...) asparagine). Glu-1325 contacts Ca(2+). Residue Asn-1329 is glycosylated (N-linked (GlcNAc...) asparagine). An intrachain disulfide couples Cys-1330 to Cys-1348. Ca(2+)-binding residues include Asp-1333, Asp-1370, and Val-1372. Cystine bridges form between Cys-1388–Cys-1414 and Cys-1441–Cys-1463. Asn-1497 is a glycosylation site (N-linked (GlcNAc...) asparagine). A disulfide bond links Cys-1507 and Cys-1533. Asn-1548 is a glycosylation site (N-linked (GlcNAc...) asparagine). 5 disulfide bridges follow: Cys-1560-Cys-1578, Cys-1617-Cys-1644, Cys-1672-Cys-1694, Cys-1735-Cys-1761, and Cys-1788-Cys-1809. N-linked (GlcNAc...) asparagine glycosylation occurs at Asn-1643. Asn-1799, Asn-1816, and Asn-1882 each carry an N-linked (GlcNAc...) asparagine glycan. The cysteines at positions 1902 and 1924 are disulfide-linked. Residue Asn-1961 is glycosylated (N-linked (GlcNAc...) asparagine). 2 disulfide bridges follow: Cys-1975–Cys-2003 and Cys-2029–Cys-2051. CUB domains follow at residues 1975 to 2088 (CGGF…FHKS), 2089 to 2210 (CGGY…YEAK), 2214 to 2331 (CGGN…YAIA), 2333 to 2445 (CGGR…FESS), 2449 to 2562 (CGGE…YTSS), 2567 to 2684 (CGGS…YSFT), 2686 to 2798 (CGGI…WNTQ), 2802 to 2916 (CGGI…FVSR), 2917 to 3032 (CGGN…YKIT), 3034 to 3147 (CGGV…FQQT), 3154 to 3271 (CGGY…YTTV), 3275 to 3392 (CGGT…IAGC), 3392 to 3504 (CNRE…WTSS), and 3508 to 3620 (CGGT…TWDS). N-linked (GlcNAc...) asparagine glycans are attached at residues Asn-2082 and Asn-2114. 3 cysteine pairs are disulfide-bonded: Cys-2089-Cys-2115, Cys-2214-Cys-2244, and Cys-2272-Cys-2294. N-linked (GlcNAc...) asparagine glycosylation occurs at Asn-2317. The cysteines at positions 2333 and 2360 are disulfide-linked. N-linked (GlcNAc...) asparagine glycosylation is found at Asn-2383 and Asn-2397. Disulfide bonds link Cys-2387–Cys-2408, Cys-2449–Cys-2475, and Cys-2502–Cys-2524. N-linked (GlcNAc...) asparagine glycans are attached at residues Asn-2528, Asn-2578, Asn-2589, and Asn-2607. Cys-2567 and Cys-2596 are oxidised to a cystine. Intrachain disulfides connect Cys-2625/Cys-2646, Cys-2686/Cys-2712, Cys-2739/Cys-2761, Cys-2802/Cys-2828, Cys-2857/Cys-2880, Cys-2917/Cys-2943, and Cys-2974/Cys-2996. An N-linked (GlcNAc...) asparagine glycan is attached at Asn-2810. N-linked (GlcNAc...) asparagine glycosylation is found at Asn-2920, Asn-2942, and Asn-2986. Thr-3005 carries the phosphothreonine modification. Disulfide bonds link Cys-3034/Cys-3061 and Cys-3088/Cys-3110. Asn-3039, Asn-3100, and Asn-3122 each carry an N-linked (GlcNAc...) asparagine glycan. Intrachain disulfides connect Cys-3154/Cys-3182 and Cys-3212/Cys-3234. Asn-3265, Asn-3280, and Asn-3292 each carry an N-linked (GlcNAc...) asparagine glycan. Cystine bridges form between Cys-3275/Cys-3303 and Cys-3329/Cys-3351. Asn-3354 is a glycosylation site (N-linked (GlcNAc...) asparagine). A disulfide bridge connects residues Cys-3392 and Cys-3418. Asn-3427, Asn-3454, and Asn-3530 each carry an N-linked (GlcNAc...) asparagine glycan. Intrachain disulfides connect Cys-3445-Cys-3467, Cys-3508-Cys-3534, and Cys-3561-Cys-3583.

Interacts with AMN. Component of the cubam complex composed of one CUBN trimer and one AMN chain. The cubam complex can dimerize. Interacts with LRP2 in a dual-receptor complex in a calcium-dependent manner. Found in a complex with PID1/PCLI1, LRP1 and CUBNI. Interacts with LRP1 and PID1/PCLI1. In terms of processing, the precursor is cleaved by a trans-Golgi proteinase furin, removing a propeptide. Post-translationally, N-glycosylated. In terms of tissue distribution, detected in kidney cortex (at protein level). Detected in kidney, duodenum and jejunum.

The protein localises to the apical cell membrane. It is found in the cell membrane. The protein resides in the membrane. Its subcellular location is the coated pit. It localises to the endosome. The protein localises to the lysosome membrane. Functionally, endocytic receptor which plays a role in lipoprotein, vitamin and iron metabolism by facilitating their uptake. Acts together with LRP2 to mediate endocytosis of high-density lipoproteins, GC, hemoglobin, ALB, TF and SCGB1A1. Acts together with AMN to mediate endocytosis of the CBLIF-cobalamin complex. Binds to ALB, MB, Kappa and lambda-light chains, TF, hemoglobin, GC, SCGB1A1, APOA1, high density lipoprotein, and the CBLIF-cobalamin complex. Ligand binding requires calcium. Serves as important transporter in several absorptive epithelia, including intestine, renal proximal tubules and embryonic yolk sac. May play an important role in the development of the peri-implantation embryo through internalization of APOA1 and cholesterol. Binds to LGALS3 at the maternal-fetal interface. The sequence is that of Cubilin (CUBN) from Canis lupus familiaris (Dog).